A 155-amino-acid chain; its full sequence is Small ribosomal subunit protein uS7c (155 aa).

It belongs to the universal ribosomal protein uS7 family. Part of the 30S ribosomal subunit.

The protein resides in the plastid. It localises to the chloroplast. Functionally, one of the primary rRNA binding proteins, it binds directly to 16S rRNA where it nucleates assembly of the head domain of the 30S subunit. The chain is Small ribosomal subunit protein uS7c (rps7) from Cornus mas (Cornelian cherry dogwood).